Consider the following 191-residue polypeptide: Ribosome hibernation promotion factor (191 aa).

Residues lysine 100–serine 123 form a disordered region.

The protein belongs to the HPF/YfiA ribosome-associated protein family. Long HPF subfamily. As to quaternary structure, interacts with 100S ribosomes.

It localises to the cytoplasm. Its function is as follows. Required for dimerization of active 70S ribosomes into 100S ribosomes in stationary phase; 100S ribosomes are translationally inactive and sometimes present during exponential growth. The chain is Ribosome hibernation promotion factor from Deinococcus radiodurans (strain ATCC 13939 / DSM 20539 / JCM 16871 / CCUG 27074 / LMG 4051 / NBRC 15346 / NCIMB 9279 / VKM B-1422 / R1).